Consider the following 330-residue polypeptide: MTTSLLLHPRWPESLMYVYEDSAAESGIGGGGGGGGGGTGGAGGGCSGASPGKAPSMDGLGSSCPASHCRDLLPHPVLGRPPAPLGAPQGAVYTDIPAPEAARQCAPPPAPPTSSSATLGYGYPFGGSYYGCRLSHNVNLQQKPCAYHPGDKYPEPSGALPGDDLSSRAKEFAFYPSFASSYQAMPGYLDVSVVPGISGHPEPRHDALIPVEGYQHWALSNGWDSQVYCSKEQSQSAHLWKSPFPDVVPLQPEVSSYRRGRKKRVPYTKVQLKELEKEYAASKFITKEKRRRISATTNLSERQVTIWFQNRRVKEKKVVSKSKAPHLHST.

Residues 30–47 show a composition bias toward gly residues; that stretch reads GGGGGGGGGTGGAGGGCS. Residues 30–50 are disordered; sequence GGGGGGGGGTGGAGGGCSGAS. The segment at residues 260 to 319 is a DNA-binding region (homeobox); sequence GRKKRVPYTKVQLKELEKEYAASKFITKEKRRRISATTNLSERQVTIWFQNRRVKEKKVV.

The protein belongs to the Abd-B homeobox family.

It is found in the nucleus. Transcription factor which plays a role in hair follicle differentiation. Regulates FOXQ1 expression and that of other hair-specific genes. The chain is Homeobox protein Hox-C13 (HOXC13) from Homo sapiens (Human).